A 249-amino-acid chain; its full sequence is Putative [LysW]-aminoadipate/[LysW]-glutamate kinase (249 aa).

Arg-64 and Asn-166 together coordinate substrate.

Belongs to the acetylglutamate kinase family. LysZ subfamily.

It is found in the cytoplasm. It catalyses the reaction [amino-group carrier protein]-C-terminal-N-(1,4-dicarboxybutan-1-yl)-L-glutamine + ATP = [amino-group carrier protein]-C-terminal-N-(1-carboxy-5-phosphooxy-5-oxopentan-1-yl)-L-glutamine + ADP. The enzyme catalyses [amino-group carrier protein]-C-terminal-gamma-(L-glutamyl)-L-glutamate + ATP = [amino-group carrier protein]-C-terminal-gamma-(5-phospho-L-glutamyl)-L-glutamate + ADP. It participates in amino-acid biosynthesis; L-lysine biosynthesis via AAA pathway; L-lysine from L-alpha-aminoadipate (Thermus route): step 2/5. It functions in the pathway amino-acid biosynthesis; L-arginine biosynthesis. In terms of biological role, involved in both the arginine and lysine biosynthetic pathways. Phosphorylates the LysW-bound precursors glutamate (for arginine biosynthesis), respectively alpha-aminoadipate (for lysine biosynthesis). In Pyrococcus horikoshii (strain ATCC 700860 / DSM 12428 / JCM 9974 / NBRC 100139 / OT-3), this protein is Putative [LysW]-aminoadipate/[LysW]-glutamate kinase.